We begin with the raw amino-acid sequence, 250 residues long: Transcriptional activator protein ExpR (250 aa).

Positions 173–238 (KSQEADLFSQ…HAIRLGVEMN (66 aa)) constitute an HTH luxR-type domain. A DNA-binding region (H-T-H motif) is located at residues 197–216 (YQEIALILGITTSTVKFHIG).

It belongs to the autoinducer-regulated transcriptional regulatory protein family.

In terms of biological role, functions as an OHLL responsive transcriptional regulator that acts in virulence (soft rot disease) through the activation of genes for plant tissue macerating enzymes. The chain is Transcriptional activator protein ExpR (expR) from Dickeya dadantii (strain 3937) (Erwinia chrysanthemi (strain 3937)).